The sequence spans 122 residues: Large ribosomal subunit protein uL14 (122 aa).

This sequence belongs to the universal ribosomal protein uL14 family. As to quaternary structure, part of the 50S ribosomal subunit. Forms a cluster with proteins L3 and L19. In the 70S ribosome, L14 and L19 interact and together make contacts with the 16S rRNA in bridges B5 and B8.

In terms of biological role, binds to 23S rRNA. Forms part of two intersubunit bridges in the 70S ribosome. This is Large ribosomal subunit protein uL14 from Myxococcus xanthus (strain DK1622).